We begin with the raw amino-acid sequence, 401 residues long: Propionate kinase (401 aa).

Positions 11 and 18 each coordinate ATP. Mg(2+) is bound at residue N11. Residue R86 participates in substrate binding. Catalysis depends on D143, which acts as the Proton donor/acceptor. Residues H175, H203 to G207, D278 to R280, and G326 to N330 contribute to the ATP site.

It belongs to the acetokinase family. TdcD subfamily. As to quaternary structure, homodimer. Mg(2+) is required as a cofactor.

The enzyme catalyses propanoate + ATP = propanoyl phosphate + ADP. It participates in amino-acid degradation; L-threonine degradation via propanoate pathway; propanoate from L-threonine: step 4/4. Functionally, catalyzes the conversion of propionyl phosphate and ADP to propionate and ATP. The polypeptide is Propionate kinase (Klebsiella pneumoniae (strain 342)).